A 706-amino-acid polypeptide reads, in one-letter code: Fatty acid oxidation complex subunit alpha (706 aa).

Residues 1-188 (MEKTFNLTRR…KMGLVNDVVP (188 aa)) are enoyl-CoA hydratase. The 3-hydroxyacyl-CoA dehydrogenase stretch occupies residues 308–706 (RKVKKAVILG…TMAQENAHFF (399 aa)).

The protein in the N-terminal section; belongs to the enoyl-CoA hydratase/isomerase family. This sequence in the central section; belongs to the 3-hydroxyacyl-CoA dehydrogenase family. Heterotetramer of two alpha chains (FadJ) and two beta chains (FadI).

It is found in the cytoplasm. The enzyme catalyses a (3S)-3-hydroxyacyl-CoA = a (2E)-enoyl-CoA + H2O. The catalysed reaction is a 4-saturated-(3S)-3-hydroxyacyl-CoA = a (3E)-enoyl-CoA + H2O. It catalyses the reaction a (3S)-3-hydroxyacyl-CoA + NAD(+) = a 3-oxoacyl-CoA + NADH + H(+). It carries out the reaction (3S)-3-hydroxybutanoyl-CoA = (3R)-3-hydroxybutanoyl-CoA. The protein operates within lipid metabolism; fatty acid beta-oxidation. In terms of biological role, catalyzes the formation of a hydroxyacyl-CoA by addition of water on enoyl-CoA. Also exhibits 3-hydroxyacyl-CoA epimerase and 3-hydroxyacyl-CoA dehydrogenase activities. This is Fatty acid oxidation complex subunit alpha from Shewanella baltica (strain OS155 / ATCC BAA-1091).